Reading from the N-terminus, the 250-residue chain is MKQNIKLGVIAALMLIVLTPVTSNAMHIMEGYLPVKWSIAWGVIFIPFFLVGLKSIGKIVKQDPKKKVLLALCGAFVFVLSALKIPSVTGSCSHPTGVGLGAIMFGPSVMFVLGTIVLIFQALLLAHGGITTLGANAFSMAIIGPIISFLIFKALKKKDGNNAMPVFLAAAIGDLATYTVTSIQLALAFPDPSGGVMASAIKFLGIFFMTQIPIAIAEGILTVIVYNLITENGEKSILENNDKGVKANEC.

Residues 1 to 25 form the signal peptide; sequence MKQNIKLGVIAALMLIVLTPVTSNA. Helical transmembrane passes span 33–53, 68–88, 100–120, 132–152, 163–183, and 205–225; these read LPVKWSIAWGVIFIPFFLVGL, VLLALCGAFVFVLSALKIPSV, LGAIMFGPSVMFVLGTIVLIF, TLGANAFSMAIIGPIISFLIF, AMPVFLAAAIGDLATYTVTSI, and GIFFMTQIPIAIAEGILTVIV.

It belongs to the CbiM family. Forms an energy-coupling factor (ECF) transporter complex composed of an ATP-binding protein (A component, CbiO), a transmembrane protein (T component, CbiQ) and 2 possible substrate-capture proteins (S components, CbiM and CbiN) of unknown stoichimetry.

The protein resides in the cell membrane. It participates in cofactor biosynthesis; adenosylcobalamin biosynthesis. Functionally, part of the energy-coupling factor (ECF) transporter complex CbiMNOQ involved in cobalt import. This is Cobalt transport protein CbiM from Clostridioides difficile (strain R20291) (Peptoclostridium difficile).